The sequence spans 242 residues: tRNA pseudouridine synthase A (242 aa).

Asp-51 serves as the catalytic Nucleophile. Residue Tyr-107 coordinates substrate.

It belongs to the tRNA pseudouridine synthase TruA family. In terms of assembly, homodimer.

The catalysed reaction is uridine(38/39/40) in tRNA = pseudouridine(38/39/40) in tRNA. Functionally, formation of pseudouridine at positions 38, 39 and 40 in the anticodon stem and loop of transfer RNAs. The protein is tRNA pseudouridine synthase A of Helicobacter pylori (strain HPAG1).